Consider the following 584-residue polypeptide: Long-chain-fatty-acid--AMP ligase FadD23 (584 aa).

The next 2 helical transmembrane spans lie at 199 to 219 (YFADTGAVPPLDLFIMSWLPF) and 225 to 245 (LVLGVCAPIIVGCGAVLTSPV).

Belongs to the ATP-dependent AMP-binding enzyme family.

Its subcellular location is the membrane. The catalysed reaction is holo-[(hydroxy)phthioceranic acid synthase] + hexadecanoate + ATP = hexadecanoyl-[(hydroxy)phthioceranic acid synthase] + AMP + diphosphate. The enzyme catalyses holo-[(hydroxy)phthioceranic acid synthase] + octadecanoate + ATP = octadecanoyl-[(hydroxy)phthioceranic acid synthase] + AMP + diphosphate. It functions in the pathway lipid metabolism; fatty acid biosynthesis. Its function is as follows. Catalyzes the activation of long-chain fatty acids as acyl-adenylates (acyl-AMP), which are then transferred to the multifunctional polyketide synthase (PKS) type III for further chain extension. Involved in the biosynthesis of sulfolipid 1 (SL-1). The sequence is that of Long-chain-fatty-acid--AMP ligase FadD23 (fadD23) from Mycobacterium bovis (strain ATCC BAA-935 / AF2122/97).